The sequence spans 768 residues: MHAIAGLTGFLAGVSLSYAAPTQENITSDAYFYGQSPAVYPSPEGTGSGAWASAYEKAKAFVANLTPEEKVNLTAGTDADNGCSGNIPAIPRLNFPGLCVSDAGNGLRSTDHVNAWSSGIHTGASWNKDLAQKRGLHMGSEYHKKGVNVLLGPVVGPLGRIAEGGRNWEGFSVDPYHSGLLVYETIRGIQAAGVGTSTKHYIANEQETNRNPESTDGIDVAAVSSNIDDKTMHELYLWPFQDVVRAGSVSIMCSYQRINNSYGCQNSKTLNGLLKTELGFQGYVMTDWGAQHGGIASSNAGLDMVMPSSTLWNSNLTDAIANGTMEASRLDDMATRIIASWYQMNQDAGFPSPGIGMPADVYAPHQAIIGKSSDSRKVLLQSAIEGHVLVKNKNNTLPLKSPEMISVFGYDAKGPDSLGFALEWLSYSPAIQPNHTLIVGGGSGGNSPAYISAPLDALQQQVIEDGSSILWNISAQDPEVDPNTDACLVFINSYATEGYDRAGLVDEGSDELVTNVASKCSNTIVTIHNAGIRLVNNWIDHENVTAVIFAHLPGQDSGRALVELLYGRSNPSGKLPYTVAKNADDYGALLHPKLPEGQYGLFPQDDFSEGVYIDYRAFDKQGIEPQFEFGFGLSYTTFDYSGLNIGQVSDNSTSRYPPSAAIQEGGNPHLWDVILRVSVDITNSGPVAGDEVAQLYVGIPNGPVRQLRGFEKVNIPVGQTVTVEFALGRRDLSTWDVVAQEWLLQSGTYQVYVGRSSRDLPLQGEFTI.

Positions 1-19 are cleaved as a signal peptide; that stretch reads MHAIAGLTGFLAGVSLSYA. 3 N-linked (GlcNAc...) asparagine glycosylation sites follow: N25, N72, and N259. The active site involves D287. Residues N315, N322, N394, N434, N472, N543, and N651 are each glycosylated (N-linked (GlcNAc...) asparagine).

The protein belongs to the glycosyl hydrolase 3 family.

The protein resides in the secreted. It catalyses the reaction Hydrolysis of terminal, non-reducing beta-D-glucosyl residues with release of beta-D-glucose.. It participates in glycan metabolism; cellulose degradation. Beta-glucosidases are one of a number of cellulolytic enzymes involved in the degradation of cellulosic biomass. Catalyzes the last step releasing glucose from the inhibitory cellobiose. This is Probable beta-glucosidase M (bglM) from Aspergillus flavus (strain ATCC 200026 / FGSC A1120 / IAM 13836 / NRRL 3357 / JCM 12722 / SRRC 167).